Here is a 433-residue protein sequence, read N- to C-terminus: Phosphomethylpyrimidine synthase 1 (433 aa).

Residues asparagine 66, methionine 94, tyrosine 123, histidine 162, 184 to 186 (SRG), 225 to 228 (DALR), and glutamate 264 each bind substrate. Histidine 268 provides a ligand contact to Zn(2+). Residue tyrosine 291 participates in substrate binding. Histidine 332 contacts Zn(2+). Residues cysteine 408, cysteine 411, and cysteine 415 each contribute to the [4Fe-4S] cluster site.

The protein belongs to the ThiC family. It depends on [4Fe-4S] cluster as a cofactor.

The catalysed reaction is 5-amino-1-(5-phospho-beta-D-ribosyl)imidazole + S-adenosyl-L-methionine = 4-amino-2-methyl-5-(phosphooxymethyl)pyrimidine + CO + 5'-deoxyadenosine + formate + L-methionine + 3 H(+). It participates in cofactor biosynthesis; thiamine diphosphate biosynthesis. Functionally, catalyzes the synthesis of the hydroxymethylpyrimidine phosphate (HMP-P) moiety of thiamine from aminoimidazole ribotide (AIR) in a radical S-adenosyl-L-methionine (SAM)-dependent reaction. This chain is Phosphomethylpyrimidine synthase 1, found in Saccharolobus solfataricus (strain ATCC 35092 / DSM 1617 / JCM 11322 / P2) (Sulfolobus solfataricus).